The primary structure comprises 313 residues: Homoserine O-succinyltransferase (313 aa).

Cys142 acts as the Acyl-thioester intermediate in catalysis. Positions 163 and 192 each coordinate substrate. The active-site Proton acceptor is His235. The active site involves Glu237. Arg249 is a substrate binding site.

This sequence belongs to the MetA family.

It is found in the cytoplasm. It carries out the reaction L-homoserine + succinyl-CoA = O-succinyl-L-homoserine + CoA. Its pathway is amino-acid biosynthesis; L-methionine biosynthesis via de novo pathway; O-succinyl-L-homoserine from L-homoserine: step 1/1. Functionally, transfers a succinyl group from succinyl-CoA to L-homoserine, forming succinyl-L-homoserine. This is Homoserine O-succinyltransferase from Vibrio parahaemolyticus serotype O3:K6 (strain RIMD 2210633).